We begin with the raw amino-acid sequence, 124 residues long: Cytochrome c2 (124 aa).

Glutamine 1 bears the Pyrrolidone carboxylic acid mark. Residues cysteine 16, cysteine 19, histidine 20, and methionine 85 each coordinate heme c.

This sequence belongs to the cytochrome c family. Post-translationally, binds 1 heme c group covalently per subunit.

Its subcellular location is the periplasm. In terms of biological role, cytochrome c2 is found mainly in purple, non-sulfur, photosynthetic bacteria where it functions as the electron donor to the oxidized bacteriochlorophyll in the photophosphorylation pathway. However, it may also have a role in the respiratory chain and is found in some non-photosynthetic bacteria. The polypeptide is Cytochrome c2 (Afifella marina (Rhodobium marinum)).